A 252-amino-acid polypeptide reads, in one-letter code: 5'-nucleotidase SurE (252 aa).

Positions 8, 9, 39, and 91 each coordinate a divalent metal cation.

This sequence belongs to the SurE nucleotidase family. A divalent metal cation serves as cofactor.

It is found in the cytoplasm. It carries out the reaction a ribonucleoside 5'-phosphate + H2O = a ribonucleoside + phosphate. In terms of biological role, nucleotidase that shows phosphatase activity on nucleoside 5'-monophosphates. The sequence is that of 5'-nucleotidase SurE from Gemmatimonas aurantiaca (strain DSM 14586 / JCM 11422 / NBRC 100505 / T-27).